The primary structure comprises 810 residues: Volume-regulated anion channel subunit LRRC8A (810 aa).

Methionine 1 bears the N-acetylmethionine mark. The Cytoplasmic segment spans residues 1–22 (MIPVTELRYFADTQPAYRILKP). Residues 23–47 (WWDVFTDYISIVMLMIAVFGGTLQV) traverse the membrane as a helical segment. At 48–123 (TQDKMICLPC…YENRLHWFAK (76 aa)) the chain is on the extracellular side. Disulfide bonds link cysteine 54–cysteine 310, cysteine 57–cysteine 65, and cysteine 113–cysteine 295. 2 N-linked (GlcNAc...) asparagine glycosylation sites follow: asparagine 66 and asparagine 83. Residues 124-142 (YFPYLVLLHTLIFLACSNF) form a helical membrane-spanning segment. Topologically, residues 143 to 264 (WFKFPRTSSK…EEGDIVYRLY (122 aa)) are cytoplasmic. Threonine 200 carries the phosphothreonine modification. Phosphoserine is present on serine 202. The residue at position 215 (threonine 215) is a Phosphothreonine. A Phosphoserine modification is found at serine 217. A helical membrane pass occupies residues 265–286 (MRQTIIKVIKFALIICYTVYYV). Residues 287–316 (HNIKFDVDCTVDIESLTGYRTYRCAHPLAT) are Extracellular-facing. Residues 317–341 (LFKILASFYISLVIFYGLICMYTLW) traverse the membrane as a helical segment. Topologically, residues 342–810 (WMLRRSLKKY…RLWRADKEQA (469 aa)) are cytoplasmic. LRR repeat units lie at residues 411–422 (WTLDKLRQRLTK), 423–445 (NAQD…VFDL), 447–468 (ELEV…IAQL), 469–492 (TGLK…AFLR), 493–515 (ENLR…IYSL), 518–542 (LEEL…GLRE), 543–565 (LKRL…VTDV), 567–589 (VHLQ…SLKK), 590–613 (MVNL…IFSL), 614–637 (HNLQ…SFQH), 639–661 (HRLT…IGNL), 662–684 (TNLE…LFYC), 686–707 (KLRY…IGLL), 708–730 (QNLQ…LFQC), 732–753 (KLRA…VGEL), 754–776 (TNLT…LGEC), and 778–801 (LLKR…VKER). A Di-leucine motif motif is present at residues 706-707 (LL).

Belongs to the LRRC8 family. Heterohexamer; oligomerizes with other LRRC8 proteins (LRRC8B, LRRC8C, LRRC8D and/or LRRC8E) to form a heterohexamer. Can form homohexamers in vitro, but these have lower conductance than heterohexamers. In vivo, the subunit composition may depend primarily on expression levels, and heterooligomeric channels containing various proportions of the different LRRC8 proteins may coexist. Interact with GRB2. Interacts with NOX4; this interaction prevents the ubiquitin-mediated degradation of LRRC8A. In terms of processing, N-glycosylated. Ubiquitously expressed. High levels detected in the bone marrow; lower levels found in peripheral blood cells. Highly expressed in pancreatic beta cells.

It is found in the cell membrane. Its subcellular location is the lysosome membrane. It catalyses the reaction chloride(in) = chloride(out). It carries out the reaction iodide(out) = iodide(in). The catalysed reaction is taurine(out) = taurine(in). The enzyme catalyses L-aspartate(out) = L-aspartate(in). It catalyses the reaction L-glutamate(out) = L-glutamate(in). It carries out the reaction myo-inositol(out) = myo-inositol(in). The catalysed reaction is 2',3'-cGAMP(out) = 2',3'-cGAMP(in). Its activity is regulated as follows. Inhibited by (4-[(2-butyl-6,7-dichloro-2-cyclopentyl-2,3-dihydro-1-oxo-1H-inden-5-yl)oxy]butanoic acid), which plugs the channel like a cork in a bottle by binding in the extracellular selectivity filter and sterically occluding ion conduction. Lipids may block conduction in closed heterohexameric channels. Its function is as follows. Essential component of the volume-regulated anion channel (VRAC, also named VSOAC channel), an anion channel required to maintain a constant cell volume in response to extracellular or intracellular osmotic changes. The VRAC channel conducts iodide better than chloride and can also conduct organic osmolytes like taurine. Mediates efflux of amino acids, such as aspartate and glutamate, in response to osmotic stress. In complex with LRRC8C or LRRC8E, acts as a transporter of immunoreactive cyclic dinucleotide GMP-AMP (2'-3'-cGAMP), an immune messenger produced in response to DNA virus in the cytosol: mediates both import and export of 2'-3'-cGAMP, thereby promoting transfer of 2'-3'-cGAMP to bystander cells. In contrast, complexes containing LRRC8D inhibit transport of 2'-3'-cGAMP. Required for in vivo channel activity, together with at least one other family member (LRRC8B, LRRC8C, LRRC8D or LRRC8E); channel characteristics depend on the precise subunit composition. Can form functional channels by itself (in vitro). Involved in B-cell development: required for the pro-B cell to pre-B cell transition. Also required for T-cell development. Required for myoblast differentiation: VRAC activity promotes membrane hyperpolarization and regulates insulin-stimulated glucose metabolism and oxygen consumption. Also acts as a regulator of glucose-sensing in pancreatic beta cells: VRAC currents, generated in response to hypotonicity- or glucose-induced beta cell swelling, depolarize cells, thereby causing electrical excitation, leading to increase glucose sensitivity and insulin secretion. Also plays a role in lysosome homeostasis by forming functional lysosomal VRAC channels in response to low cytoplasmic ionic strength condition: lysosomal VRAC channels are necessary for the formation of large lysosome-derived vacuoles, which store and then expel excess water to maintain cytosolic water homeostasis. Acts as a key factor in NLRP3 inflammasome activation by modulating itaconate efflux and mitochondria function. The sequence is that of Volume-regulated anion channel subunit LRRC8A from Mus musculus (Mouse).